Consider the following 228-residue polypeptide: N-acylneuraminate cytidylyltransferase (228 aa).

It belongs to the CMP-NeuNAc synthase family.

It localises to the cytoplasm. The catalysed reaction is an N-acylneuraminate + CTP = a CMP-N-acyl-beta-neuraminate + diphosphate. This Neisseria meningitidis serogroup B (strain ATCC BAA-335 / MC58) protein is N-acylneuraminate cytidylyltransferase (neuA).